We begin with the raw amino-acid sequence, 181 residues long: Secreted chorismate mutase (181 aa).

The first 20 residues, 1–20, serve as a signal peptide directing secretion; sequence MLASVALAALAGVGTPHATA. Positions 21–100 constitute a Chorismate mutase domain; that stretch reads DDASPLVPLV…ATSSVEHTRF (80 aa). Substrate-binding positions include Arg-36, Lys-47, Asp-56, 59–63, 92–96, and Arg-121; these read REQQV and TSSVE. A disulfide bridge links Cys-147 with Cys-180.

Homodimer.

The protein localises to the secreted. It carries out the reaction chorismate = prephenate. It functions in the pathway metabolic intermediate biosynthesis; prephenate biosynthesis; prephenate from chorismate: step 1/1. Functionally, catalyzes the Claisen rearrangement of chorismate to prephenate. May play some role in the pathogenicity. The sequence is that of Secreted chorismate mutase from Mycolicibacterium smegmatis (strain ATCC 700084 / mc(2)155) (Mycobacterium smegmatis).